We begin with the raw amino-acid sequence, 218 residues long: 7-cyano-7-deazaguanine synthase (218 aa).

9–19 (FSGGMDSFTVL) contributes to the ATP binding site. Zn(2+) contacts are provided by Cys-185, Cys-193, Cys-196, and Cys-199.

Belongs to the QueC family. Requires Zn(2+) as cofactor.

It carries out the reaction 7-carboxy-7-deazaguanine + NH4(+) + ATP = 7-cyano-7-deazaguanine + ADP + phosphate + H2O + H(+). Its pathway is purine metabolism; 7-cyano-7-deazaguanine biosynthesis. Catalyzes the ATP-dependent conversion of 7-carboxy-7-deazaguanine (CDG) to 7-cyano-7-deazaguanine (preQ(0)). This chain is 7-cyano-7-deazaguanine synthase, found in Pseudoalteromonas atlantica (strain T6c / ATCC BAA-1087).